The sequence spans 66 residues: Large ribosomal subunit protein uL29 (66 aa).

The protein belongs to the universal ribosomal protein uL29 family.

The sequence is that of Large ribosomal subunit protein uL29 from Francisella philomiragia subsp. philomiragia (strain ATCC 25017 / CCUG 19701 / FSC 153 / O#319-036).